A 241-amino-acid polypeptide reads, in one-letter code: Agamous-like MADS-box protein AGL9 homolog (241 aa).

Residues 3–57 (RGRVELKRIENKINRQVTFAKRRNGLLKKAYELSVLCDAEVALIIFSNRGKLYEF) form the MADS-box domain. Residues 89 to 179 (EISSQQEYLK…KQRLMEGSTL (91 aa)) enclose the K-box domain.

Its subcellular location is the nucleus. Probable transcription factor. This is Agamous-like MADS-box protein AGL9 homolog (FBP2) from Petunia hybrida (Petunia).